The sequence spans 437 residues: ATP-dependent protease ATPase subunit HslU (437 aa).

ATP is bound by residues valine 18, 60–65 (GVGKTE), aspartate 250, glutamate 315, and arginine 387.

It belongs to the ClpX chaperone family. HslU subfamily. In terms of assembly, a double ring-shaped homohexamer of HslV is capped on each side by a ring-shaped HslU homohexamer. The assembly of the HslU/HslV complex is dependent on binding of ATP.

The protein localises to the cytoplasm. Its function is as follows. ATPase subunit of a proteasome-like degradation complex; this subunit has chaperone activity. The binding of ATP and its subsequent hydrolysis by HslU are essential for unfolding of protein substrates subsequently hydrolyzed by HslV. HslU recognizes the N-terminal part of its protein substrates and unfolds these before they are guided to HslV for hydrolysis. This chain is ATP-dependent protease ATPase subunit HslU, found in Desulfovibrio desulfuricans (strain ATCC 27774 / DSM 6949 / MB).